The sequence spans 238 residues: Zwei Ig domain protein zig-2 (238 aa).

A signal peptide spans 1–17 (MLKFTAISFVLLNAAES). The Ig-like C2-type 1 domain occupies 31–130 (PLLKFTRTPN…NGLTKLEHVA (100 aa)). N-linked (GlcNAc...) asparagine glycosylation is found at asparagine 40 and asparagine 43. The cysteines at positions 54 and 117 are disulfide-linked. 3 N-linked (GlcNAc...) asparagine glycosylation sites follow: asparagine 137, asparagine 206, and asparagine 216. Residues 149–230 (PFISMTVDFR…NHFGETTAIT (82 aa)) enclose the Ig-like C2-type 2 domain. Cysteine 170 and cysteine 217 are joined by a disulfide.

As to expression, expressed in PVT neurons and weakly in some head neurons.

It is found in the secreted. Its function is as follows. Probably not involved in maintaining the position of ASI and ASH head neuron cell bodies and ventral nerve cord axons of PVQ, PVP, RMEV, AVK and HSN neurons. This is Zwei Ig domain protein zig-2 from Caenorhabditis elegans.